The sequence spans 332 residues: Long form salivary protein D7L1 (332 aa).

Residues 1–21 (MHSPKSFLLLAVVFVALRVTA) form the signal peptide. Cystine bridges form between Cys40–Cys77 and Cys73–Cys133. Trp61 serves as a coordination point for leukotriene E4. Residue Lys176 participates in leukotriene E4 binding. Disulfide bonds link Cys184–Cys219, Cys200–Cys331, and Cys259–Cys278. 2 residues coordinate noradrenaline: Glu185 and Arg203. Residues Asp294 and Glu297 each coordinate noradrenaline.

The protein belongs to the PBP/GOBP family. Female mosquito salivary gland (at protein level).

It is found in the secreted. Functionally, modulates blood feeding of female mosquitoes on vertebrate species by binding and sequestering different mediators involved in the host response, such as biogenic amines and eicosanoids. Binds dopamine, serotonin, histamine, tryptamine, adrenaline, noradrenaline, leukotriene B4, leukotriene C4, leukotriene D4, leukotriene E4 and U-46619, a stable analog of thromboxane A2. Inhibits platelet aggregation induced by serotonin and low doses of thromboxane A2 analog U-46619 but not by high doses of U-46619, collagen or ADP. Prevents leukocyte recruitment. The chain is Long form salivary protein D7L1 from Aedes albopictus (Asian tiger mosquito).